Here is a 222-residue protein sequence, read N- to C-terminus: DnaJ homolog subfamily B member 9 (222 aa).

The first 23 residues, methionine 1–alanine 23, serve as a signal peptide directing secretion. Residues serine 26 to glycine 90 form the J domain. The divergent targeting domain stretch occupies residues histidine 91 to glutamine 222. Phosphoserine is present on serine 133.

As to quaternary structure, interacts with HSPA5/BiP; interaction is direct. Interacts with ERN1/IRE1 (via the luminal region). Interacts with DERL1. In terms of processing, not N-glycosylated.

Its subcellular location is the endoplasmic reticulum lumen. In terms of biological role, co-chaperone for Hsp70 protein HSPA5/BiP that acts as a key repressor of the ERN1/IRE1-mediated unfolded protein response (UPR). J domain-containing co-chaperones stimulate the ATPase activity of Hsp70 proteins and are required for efficient substrate recognition by Hsp70 proteins. In the unstressed endoplasmic reticulum, interacts with the luminal region of ERN1/IRE1 and selectively recruits HSPA5/BiP: HSPA5/BiP disrupts the dimerization of the active ERN1/IRE1 luminal region, thereby inactivating ERN1/IRE1. Also involved in endoplasmic reticulum-associated degradation (ERAD) of misfolded proteins. Required for survival of B-cell progenitors and normal antibody production. The sequence is that of DnaJ homolog subfamily B member 9 from Mus musculus (Mouse).